Consider the following 229-residue polypeptide: Cytidylate kinase (229 aa).

12 to 20 (GPSGVGKST) lines the ATP pocket.

Belongs to the cytidylate kinase family. Type 1 subfamily.

Its subcellular location is the cytoplasm. It catalyses the reaction CMP + ATP = CDP + ADP. It carries out the reaction dCMP + ATP = dCDP + ADP. This is Cytidylate kinase from Mesomycoplasma hyopneumoniae (strain 232) (Mycoplasma hyopneumoniae).